The primary structure comprises 206 residues: MDIVAETQIEEESLIPDATSTPLETEVVADTTLRKTALHLAGVDNLSEEQVKGFISAYAPESQCTIEWINDNECNVVYADDDVSRNALFHLIMESPTEFSEELEYQTKPHPTVPTCQFKIRYARYGDKKVKSAHLYSRYYLFHGDPREEKAQKSKSKSRNQDERGSPLDERLGPKVSDLTLMERIFQVRRKPRKSRRDRRSRVSKR.

The interval 147 to 206 (REEKAQKSKSKSRNQDERGSPLDERLGPKVSDLTLMERIFQVRRKPRKSRRDRRSRVSKR) is disordered. Basic and acidic residues predominate over residues 159-173 (RNQDERGSPLDERLG). Residues 187-206 (QVRRKPRKSRRDRRSRVSKR) show a composition bias toward basic residues.

This is an uncharacterized protein from Schizosaccharomyces pombe (strain 972 / ATCC 24843) (Fission yeast).